Reading from the N-terminus, the 125-residue chain is Photosystem II extrinsic protein U (125 aa).

The N-terminal stretch at 1 to 29 (MKRLLSWLTGLVVIAGLLIGLLVPPSVSA) is a signal peptide.

It belongs to the PsbU family. As to quaternary structure, PSII is composed of 1 copy each of membrane proteins PsbA, PsbB, PsbC, PsbD, PsbE, PsbF, PsbH, PsbI, PsbJ, PsbK, PsbL, PsbM, PsbT, PsbX, PsbY, PsbZ, Psb30/Ycf12, peripheral proteins PsbO, CyanoQ (PsbQ), PsbU, PsbV and a large number of cofactors. It forms dimeric complexes.

Its subcellular location is the cellular thylakoid membrane. One of the extrinsic, lumenal subunits of photosystem II (PSII). PSII is a light-driven water plastoquinone oxidoreductase, using light energy to abstract electrons from H(2)O, generating a proton gradient subsequently used for ATP formation. The extrinsic proteins stabilize the structure of photosystem II oxygen-evolving complex (OEC), the ion environment of oxygen evolution and protect the OEC against heat-induced inactivation. This chain is Photosystem II extrinsic protein U, found in Synechococcus sp. (strain CC9311).